The primary structure comprises 171 residues: Sec-independent protein translocase protein TatB (171 aa).

The helical transmembrane segment at 2-22 (FDGIGFMELLLIGVLGLVVLG) threads the bilayer. Positions 69–171 (SKGLSNLSPE…DTRSNPKANG (103 aa)) are disordered. Over residues 88–97 (QAAQSVNRPY) the composition is skewed to polar residues. 2 stretches are compositionally biased toward low complexity: residues 114 to 130 (HSPVSSTVQTSQVHTSP) and 138 to 158 (PTATVEASPTSASPATPSEPS). Residues 160 to 171 (GADTRSNPKANG) show a composition bias toward polar residues.

This sequence belongs to the TatB family. The Tat system comprises two distinct complexes: a TatABC complex, containing multiple copies of TatA, TatB and TatC subunits, and a separate TatA complex, containing only TatA subunits. Substrates initially bind to the TatABC complex, which probably triggers association of the separate TatA complex to form the active translocon.

It is found in the cell inner membrane. Functionally, part of the twin-arginine translocation (Tat) system that transports large folded proteins containing a characteristic twin-arginine motif in their signal peptide across membranes. Together with TatC, TatB is part of a receptor directly interacting with Tat signal peptides. TatB may form an oligomeric binding site that transiently accommodates folded Tat precursor proteins before their translocation. The chain is Sec-independent protein translocase protein TatB from Shewanella baltica (strain OS185).